Reading from the N-terminus, the 320-residue chain is Putative fatty acid elongase 3 (320 aa).

Residue Asn-14 is glycosylated (N-linked (GlcNAc...) asparagine). 6 helical membrane passes run Trp-33–Phe-53, Leu-67–Leu-87, Phe-120–Val-140, Pro-145–Tyr-165, Met-203–Val-223, and Leu-242–His-262.

Belongs to the ELO family.

The protein resides in the membrane. It catalyses the reaction a very-long-chain acyl-CoA + malonyl-CoA + H(+) = a very-long-chain 3-oxoacyl-CoA + CO2 + CoA. It functions in the pathway lipid metabolism; fatty acid biosynthesis. Could be implicated in synthesis of very long chain fatty acids. May be required for normally rapid growth. This chain is Putative fatty acid elongase 3 (elo-3), found in Caenorhabditis elegans.